The following is a 332-amino-acid chain: Putative D-threonate 4-phosphate dehydrogenase (332 aa).

Substrate contacts are provided by H140 and T141. Residues H170, H214, and H270 each contribute to the a divalent metal cation site. Substrate-binding residues include K278, N287, and R296.

The protein belongs to the PdxA family. PdxA2 subfamily. As to quaternary structure, homodimer. It depends on a divalent metal cation as a cofactor.

It carries out the reaction 4-O-phospho-D-threonate + NAD(+) = dihydroxyacetone phosphate + CO2 + NADH. Catalyzes the NAD-dependent oxidation and subsequent decarboxylation of D-threonate 4-phosphate to produce dihydroxyacetone phosphate (DHAP). The sequence is that of Putative D-threonate 4-phosphate dehydrogenase from Oceanobacillus iheyensis (strain DSM 14371 / CIP 107618 / JCM 11309 / KCTC 3954 / HTE831).